A 103-amino-acid chain; its full sequence is Large ribosomal subunit protein bL21 (103 aa).

The protein belongs to the bacterial ribosomal protein bL21 family. Part of the 50S ribosomal subunit. Contacts protein L20.

Its function is as follows. This protein binds to 23S rRNA in the presence of protein L20. The polypeptide is Large ribosomal subunit protein bL21 (Clostridium botulinum (strain Alaska E43 / Type E3)).